Here is a 128-residue protein sequence, read N- to C-terminus: Large ribosomal subunit protein bL20 (128 aa).

Belongs to the bacterial ribosomal protein bL20 family.

Functionally, binds directly to 23S ribosomal RNA and is necessary for the in vitro assembly process of the 50S ribosomal subunit. It is not involved in the protein synthesizing functions of that subunit. The chain is Large ribosomal subunit protein bL20 from Micrococcus luteus (strain ATCC 4698 / DSM 20030 / JCM 1464 / CCM 169 / CCUG 5858 / IAM 1056 / NBRC 3333 / NCIMB 9278 / NCTC 2665 / VKM Ac-2230) (Micrococcus lysodeikticus).